The sequence spans 160 residues: Small ribosomal subunit protein uS7 (160 aa).

This sequence belongs to the universal ribosomal protein uS7 family. As to quaternary structure, part of the 30S ribosomal subunit. Contacts proteins S9 and S11.

Functionally, one of the primary rRNA binding proteins, it binds directly to 16S rRNA where it nucleates assembly of the head domain of the 30S subunit. Is located at the subunit interface close to the decoding center, probably blocks exit of the E-site tRNA. The sequence is that of Small ribosomal subunit protein uS7 from Ehrlichia ruminantium (strain Gardel).